We begin with the raw amino-acid sequence, 196 residues long: MAEQARTATVKRTTKETDITVTLTLDGNGTSAIASGVVFLDHMLTNFCKHAGFNLTLRCNGDLDVDDHHSVEDVALVLGTAITEALGNKSGIQRYGWAIIPMDEALARCAVDLGGRSYCVFKAEFRRPVIQGLSTEMVEHFFRSLADTMKATLHLEVLDGNNTHHKIEALFKAFAYAMKAAVSITGNDIPSTKGLI.

This sequence belongs to the imidazoleglycerol-phosphate dehydratase family.

The protein localises to the cytoplasm. The enzyme catalyses D-erythro-1-(imidazol-4-yl)glycerol 3-phosphate = 3-(imidazol-4-yl)-2-oxopropyl phosphate + H2O. It functions in the pathway amino-acid biosynthesis; L-histidine biosynthesis; L-histidine from 5-phospho-alpha-D-ribose 1-diphosphate: step 6/9. In Chlorobium chlorochromatii (strain CaD3), this protein is Imidazoleglycerol-phosphate dehydratase.